A 72-amino-acid chain; its full sequence is Translation initiation factor IF-1 (72 aa).

Positions 1 to 72 constitute an S1-like domain; sequence MAKEELLEMR…TKGRITYRFK (72 aa).

Belongs to the IF-1 family. In terms of assembly, component of the 30S ribosomal translation pre-initiation complex which assembles on the 30S ribosome in the order IF-2 and IF-3, IF-1 and N-formylmethionyl-tRNA(fMet); mRNA recruitment can occur at any time during PIC assembly.

The protein resides in the cytoplasm. In terms of biological role, one of the essential components for the initiation of protein synthesis. Stabilizes the binding of IF-2 and IF-3 on the 30S subunit to which N-formylmethionyl-tRNA(fMet) subsequently binds. Helps modulate mRNA selection, yielding the 30S pre-initiation complex (PIC). Upon addition of the 50S ribosomal subunit IF-1, IF-2 and IF-3 are released leaving the mature 70S translation initiation complex. This is Translation initiation factor IF-1 from Sphingopyxis alaskensis (strain DSM 13593 / LMG 18877 / RB2256) (Sphingomonas alaskensis).